A 252-amino-acid chain; its full sequence is Probable transcriptional regulatory protein Caur_1043 (252 aa).

Over residues 1–14 (MSGHSKWHTIRRTK) the composition is skewed to basic residues. The disordered stretch occupies residues 1–22 (MSGHSKWHTIRRTKGVNDQRRG).

It belongs to the TACO1 family.

Its subcellular location is the cytoplasm. The protein is Probable transcriptional regulatory protein Caur_1043 of Chloroflexus aurantiacus (strain ATCC 29366 / DSM 635 / J-10-fl).